The following is a 251-amino-acid chain: Pyrroloquinoline-quinone synthase (251 aa).

It belongs to the PqqC family.

It catalyses the reaction 6-(2-amino-2-carboxyethyl)-7,8-dioxo-1,2,3,4,7,8-hexahydroquinoline-2,4-dicarboxylate + 3 O2 = pyrroloquinoline quinone + 2 H2O2 + 2 H2O + H(+). It functions in the pathway cofactor biosynthesis; pyrroloquinoline quinone biosynthesis. In terms of biological role, ring cyclization and eight-electron oxidation of 3a-(2-amino-2-carboxyethyl)-4,5-dioxo-4,5,6,7,8,9-hexahydroquinoline-7,9-dicarboxylic-acid to PQQ. This chain is Pyrroloquinoline-quinone synthase, found in Klebsiella pneumoniae subsp. pneumoniae (strain ATCC 700721 / MGH 78578).